The following is a 185-amino-acid chain: Putative manganese efflux pump MntP (185 aa).

A run of 6 helical transmembrane segments spans residues 8-28, 42-62, 66-86, 103-123, 137-157, and 165-185; these read LFVI…SIGL, ISFG…GVLF, ILVI…ILML, MYFI…FTVL, IFIG…SGYL, and KYAN…MIFM.

It belongs to the MntP (TC 9.B.29) family.

It is found in the cell membrane. Its function is as follows. Probably functions as a manganese efflux pump. The sequence is that of Putative manganese efflux pump MntP from Clostridium novyi (strain NT).